Here is a 177-residue protein sequence, read N- to C-terminus: Large ribosomal subunit protein uL6 (177 aa).

This sequence belongs to the universal ribosomal protein uL6 family. As to quaternary structure, part of the 50S ribosomal subunit.

This protein binds to the 23S rRNA, and is important in its secondary structure. It is located near the subunit interface in the base of the L7/L12 stalk, and near the tRNA binding site of the peptidyltransferase center. In Rhizobium rhizogenes (strain K84 / ATCC BAA-868) (Agrobacterium radiobacter), this protein is Large ribosomal subunit protein uL6.